The primary structure comprises 399 residues: Oligoribonuclease NrnB (399 aa).

Mn(2+) serves as cofactor. Co(2+) is required as a cofactor. It depends on Mg(2+) as a cofactor.

The protein localises to the cytoplasm. Degrades RNA oligonucleotides with a length of 5 nucleotides in a 3'- to 5'-direction. Less active on shorter RNA oligonucleotides and on those with a length of 24 nucleotides. Prefers RNA oligonucleotides containing adenines rather than cytosines. The polypeptide is Oligoribonuclease NrnB (nrnB) (Bacillus subtilis (strain 168)).